The chain runs to 60 residues: Cytotoxin 1 (60 aa).

Intrachain disulfides connect Cys3–Cys21, Cys14–Cys38, Cys42–Cys53, and Cys54–Cys59.

Belongs to the three-finger toxin family. Short-chain subfamily. Type IA cytotoxin sub-subfamily. Monomer in solution; Homodimer and oligomer in the presence of negatively charged lipids forming a pore with a size ranging between 20 and 30 Angstroms. As to expression, expressed by the venom gland.

The protein localises to the secreted. The protein resides in the target cell membrane. Functionally, shows cytolytic activity on many different cells by forming pore in lipid membranes. In vivo, increases heart rate or kills the animal by cardiac arrest. In addition, it binds to heparin with high affinity, interacts with Kv channel-interacting protein 1 (KCNIP1) in a calcium-independent manner, and binds to integrin alpha-V/beta-3 (ITGAV/ITGB3) with moderate affinity. The polypeptide is Cytotoxin 1 (Naja mossambica (Mozambique spitting cobra)).